The sequence spans 902 residues: 26S proteasome regulatory subunit rpn-1 (902 aa).

The segment covering 1–41 (MAQESDLSKTADKGKGKAVDDEKKHQDVDGKTPANGKKEEE) has biased composition (basic and acidic residues). Residues 1-54 (MAQESDLSKTADKGKGKAVDDEKKHQDVDGKTPANGKKEEEQNASEELSEEDQQ) form a disordered region. Positions 42-52 (QNASEELSEED) are enriched in acidic residues. PC repeat units follow at residues 415-448 (STVA…QIQA), 449-487 (GAYL…LIRV), 488-522 (ATIM…SMQV), 525-559 (MAAL…GSRL), 568-601 (ALGL…KPTA), 645-680 (AVLG…NIRR), 681-715 (AVPL…EVAI), and 716-750 (NAIF…DQES).

The protein belongs to the proteasome subunit S2 family.

Its function is as follows. Acts as a regulatory subunit of the 26 proteasome which is involved in the ATP-dependent degradation of ubiquitinated proteins. The protein is 26S proteasome regulatory subunit rpn-1 (rpn-1) of Neurospora crassa (strain ATCC 24698 / 74-OR23-1A / CBS 708.71 / DSM 1257 / FGSC 987).